The following is a 736-amino-acid chain: Transcription regulator protein BACH1 (736 aa).

Residues 34 to 100 form the BTB domain; it reads CDVTIFVEGQ…AYTAKLILSK (67 aa). Position 196 is a phosphoserine (serine 196). Residues 286 to 295 show a composition bias toward basic and acidic residues; sequence MEPEETKKDP. Disordered regions lie at residues 286–312 and 349–389; these read MEPEETKKDPASQCPTEKSEVTPFPHN and KPLS…RSSV. Serine 364 and serine 445 each carry phosphoserine. Residues 557-620 form the bZIP domain; the sequence is CIHDIRRRSK…GETKQNLTGL (64 aa). Residues 562–578 form a basic motif region; it reads RRRSKNRIAAQRCRKRK. Residues 582–589 are leucine-zipper; sequence IQNLESEI. A disordered region spans residues 680 to 719; that stretch reads LPPCARGNSEPGYARGQESQQMSTATSEQAGPAEQCRQSG. Residues 696–708 show a composition bias toward polar residues; it reads QESQQMSTATSEQ.

Belongs to the bZIP family. CNC subfamily. Heterodimer of BACH1 and MAFK. In terms of processing, ubiquitinated by the SCF(FBXL17) complex or by the by the SCF(FBXO22) complex, leading to its degradation by the proteasome. Under oxidative stress, reactive oxygen species covalently modify cysteine residues on the bZIP domain of BACH1 and release it from chromatin. If the BTB domain of BACH1 remains intact, its beta1-alpha6 degron is recognized by FBXO22, promoting its ubiquitination and degradation. If the structural integrity of the beta1-alpha6 degron is compromised, FBXL17 will transiently associate with the BACH1 BTB dimer and remodel it into stably bound monomer for ubiquitination and degradation.

It localises to the nucleus. In terms of biological role, transcriptional regulator that acts as a repressor or activator, depending on the context. Binds to NF-E2 DNA binding sites. Plays important roles in coordinating transcription activation and repression by MAFK. Together with MAF, represses the transcription of genes under the control of the NFE2L2 oxidative stress pathway. The sequence is that of Transcription regulator protein BACH1 from Homo sapiens (Human).